We begin with the raw amino-acid sequence, 208 residues long: Probable very-long-chain (3R)-3-hydroxyacyl-CoA dehydratase (208 aa).

Over 1–11 the chain is Cytoplasmic; it reads MSKILKIQYLK. The chain crosses the membrane as a helical span at residues 12 to 35; the sequence is LYNVISCFLWMSVLLRTGLIWGIT. The Lumenal portion of the chain corresponds to 36-46; it reads KDTAVVFHETN. Residues 47-67 traverse the membrane as a helical segment; that stretch reads TLVRWVQTLAIAEVFHSIFGL. The Cytoplasmic portion of the chain corresponds to 68–78; that stretch reads VSSSPLTTIIQ. The chain crosses the membrane as a helical span at residues 79-97; the sequence is VASRLYLVWGVCYPFSYVI. Over 98-102 the chain is Lumenal; sequence EGSPI. A helical membrane pass occupies residues 103 to 123; it reads YLSMIIAWSITEIIRYAFYAF. Residues 124 to 134 are Cytoplasmic-facing; the sequence is NLNGDIPAFLT. A helical transmembrane segment spans residues 135 to 157; the sequence is WLRYNTFLILYPIGAGSEFLLVL. Residues Tyr-145 and Glu-152 contribute to the active site. Residues 158-171 are Lumenal-facing; it reads KSRIAAQYVWSLNK. A helical transmembrane segment spans residues 172 to 192; the sequence is LLWPILMSIYPPGLYIMYTHM. Topologically, residues 193-208 are cytoplasmic; the sequence is LAQRRKISKRAAARRT.

This sequence belongs to the very long-chain fatty acids dehydratase HACD family.

It is found in the endoplasmic reticulum membrane. The enzyme catalyses a very-long-chain (3R)-3-hydroxyacyl-CoA = a very-long-chain (2E)-enoyl-CoA + H2O. The protein operates within lipid metabolism; fatty acid biosynthesis. In terms of biological role, catalyzes the third of the four reactions of the long-chain fatty acids elongation cycle. This endoplasmic reticulum-bound enzymatic process, allows the addition of two carbons to the chain of long- and very long-chain fatty acids/VLCFAs per cycle. This enzyme catalyzes the dehydration of the 3-hydroxyacyl-CoA intermediate into trans-2,3-enoyl-CoA, within each cycle of fatty acid elongation. Thereby, it participates in the production of VLCFAs of different chain lengths that are involved in multiple biological processes as precursors of membrane lipids and lipid mediators. The chain is Probable very-long-chain (3R)-3-hydroxyacyl-CoA dehydratase from Schizosaccharomyces pombe (strain 972 / ATCC 24843) (Fission yeast).